A 379-amino-acid polypeptide reads, in one-letter code: Synaptic vesicle membrane protein VAT-1 (379 aa).

Ser-273 carries the post-translational modification Phosphoserine.

This sequence belongs to the zinc-containing alcohol dehydrogenase family. Quinone oxidoreductase subfamily. Cholinergic synaptic vesicles.

It localises to the cytoplasmic vesicle. It is found in the secretory vesicle. Its subcellular location is the synaptic vesicle membrane. In terms of biological role, may play a central role in the functions mediated by specific classes of synaptic vesicles. This is Synaptic vesicle membrane protein VAT-1 from Tetronarce californica (Pacific electric ray).